The primary structure comprises 340 residues: MDESKRKALENALKAIEKEFGKGAVMRLGEMPKQQVDVIPTGSLALDLALGIGGIPRGRIVEIYGPESGGKTTLALTIIAQAQRRGGVAAFVDAEHALDPLYAQRLGVQVEDLLVSQPDTGEQALEIVELLARSGAVDVIVVDSVAALVPRAEIEGEMGDQHVGLQARLMSQALRKLTAVLAKSNTAAIFINQVREKVGVTYGNPETTPGGRALKFYASVRLDVRKSGQPIKVGNEAVGVKVRVKVVKNKLAPPFREAELEIYFGRGLDPVADLVNVAVAAGVIEKAGSWFSYGELRLGQGKEKAAEALRERPELLEEIRAKVLERSDQVVLAAGEDEGE.

65–72 (GPESGGKT) contributes to the ATP binding site.

This sequence belongs to the RecA family.

The protein resides in the cytoplasm. In terms of biological role, can catalyze the hydrolysis of ATP in the presence of single-stranded DNA, the ATP-dependent uptake of single-stranded DNA by duplex DNA, and the ATP-dependent hybridization of homologous single-stranded DNAs. It interacts with LexA causing its activation and leading to its autocatalytic cleavage. This is Protein RecA from Thermus thermophilus (strain ATCC 27634 / DSM 579 / HB8).